Reading from the N-terminus, the 482-residue chain is Class E basic helix-loop-helix protein 41 (482 aa).

Residue Lys31 forms a Glycyl lysine isopeptide (Lys-Gly) (interchain with G-Cter in SUMO2) linkage. The bHLH domain occupies 44–99; sequence TYKLPHRLIEKKRRDRINECIAQLKDLLPEHLKLTTLGHLEKAVVLELTLKHLKAL. The interval 67-71 is necessary for interaction with RXRA and repressor activity towards RXRA; that stretch reads LKDLL. Lys121 participates in a covalent cross-link: Glycyl lysine isopeptide (Lys-Gly) (interchain with G-Cter in SUMO2). Residues 131–166 enclose the Orange domain; it reads FHSGFQTCAKEVLQYLSRFESWTPREPRCVQLINHL. Residue Lys210 forms a Glycyl lysine isopeptide (Lys-Gly) (interchain with G-Cter in SUMO2) linkage. 2 disordered regions span residues 228 to 298 and 438 to 482; these read AELA…GGAA and VAPL…KEAP. Basic and acidic residues predominate over residues 246–256; it reads AEARPDREKGK. A Glycyl lysine isopeptide (Lys-Gly) (interchain with G-Cter in SUMO2) cross-link involves residue Lys266. Residues 285-297 show a composition bias toward gly residues; that stretch reads RGGGSGGGPGGGA.

In terms of assembly, homodimer. Heterodimer with BHLHE40/DEC1. Interacts with CIART and BMAL1. Interacts with RXRA. Interacts with NR0B2 and HNF1A. Highly expressed in skeletal muscle and brain, moderately expressed in pancreas and heart, weakly expressed in placenta, lung, liver and kidney.

The protein localises to the nucleus. Transcriptional repressor involved in the regulation of the circadian rhythm by negatively regulating the activity of the clock genes and clock-controlled genes. Acts as the negative limb of a novel autoregulatory feedback loop (DEC loop) which differs from the one formed by the PER and CRY transcriptional repressors (PER/CRY loop). Both these loops are interlocked as it represses the expression of PER1 and in turn is repressed by PER1/2 and CRY1/2. Represses the activity of the circadian transcriptional activator: CLOCK-BMAL1 heterodimer by competing for the binding to E-box elements (5'-CACGTG-3') found within the promoters of its target genes. Negatively regulates its own expression and the expression of DBP and BHLHE41/DEC2. Acts as a corepressor of RXR and the RXR-LXR heterodimers and represses the ligand-induced RXRA/B/G, NR1H3/LXRA, NR1H4 and VDR transactivation activity. Inhibits HNF1A-mediated transactivation of CYP1A2, CYP2E1 AND CYP3A11. The chain is Class E basic helix-loop-helix protein 41 from Homo sapiens (Human).